A 361-amino-acid chain; its full sequence is S-adenosylmethionine:tRNA ribosyltransferase-isomerase (361 aa).

Belongs to the QueA family. Monomer.

Its subcellular location is the cytoplasm. The enzyme catalyses 7-aminomethyl-7-carbaguanosine(34) in tRNA + S-adenosyl-L-methionine = epoxyqueuosine(34) in tRNA + adenine + L-methionine + 2 H(+). It participates in tRNA modification; tRNA-queuosine biosynthesis. Functionally, transfers and isomerizes the ribose moiety from AdoMet to the 7-aminomethyl group of 7-deazaguanine (preQ1-tRNA) to give epoxyqueuosine (oQ-tRNA). The sequence is that of S-adenosylmethionine:tRNA ribosyltransferase-isomerase from Mesorhizobium japonicum (strain LMG 29417 / CECT 9101 / MAFF 303099) (Mesorhizobium loti (strain MAFF 303099)).